Here is a 131-residue protein sequence, read N- to C-terminus: Neo-calmodulin (131 aa).

EF-hand domains follow at residues Glu1–Asn32, Pro33–Asp68, Asp70–Lys105, and Leu106–Phe131. Residues Asp10, Asp12, Asp14, Thr16, Glu21, Asp46, Asp48, Asn50, Thr52, Glu57, Asp83, Asp85, Asn87, Tyr89, Glu94, Asp119, Asp121, Asp123, Gln125, and Glu130 each contribute to the Ca(2+) site.

The protein belongs to the calmodulin family.

The polypeptide is Neo-calmodulin (Gallus gallus (Chicken)).